The sequence spans 352 residues: Keratocan (352 aa).

An N-terminal signal peptide occupies residues 1–20; the sequence is MASTICFILWVVFVTDTVWT. An LRRNT domain is found at 33-71; sequence EDWTMHDFDCPRECFCPPSFPTALYCENRGLKEIPAIPS. 2 disulfides stabilise this stretch: C42–C48 and C46–C58. LRR repeat units follow at residues 72-93, 96-117, 122-142, 143-164, 167-180, 193-214, 215-235, and 238-258; these read RIWYLYLENNLIETIPEKPFEN, QLRWINLNKNKITNYGIEKGAL, KLLFLFLEDNELEEVPSPLPR, SLEQLQLARNKVSRIPQGTFSN, NLTLLDLQHNKLLD, NLMQLNMAKNALRNMPPRLPAN, TMQVFLDNNSIEGIPENYFNV, and KVAFLRLNHNKLSDAGLPSSG. The N-linked (GlcNAc...) (keratan sulfate) asparagine glycan is linked to N93. Residue N167 is glycosylated (N-linked (GlcNAc...) (keratan sulfate) asparagine). An N-linked (GlcNAc...) asparagine glycan is attached at N222. A glycan (N-linked (GlcNAc...) (keratan sulfate) asparagine) is linked at N260. 2 LRR repeats span residues 263–282 and 283–304; these read SILDLQLSHNQLTKVPKISA and HLQHLHLDHNKIRNVNVSVICP. N298 is a glycosylation site (N-linked (GlcNAc...) asparagine). An intrachain disulfide couples C303 to C343.

This sequence belongs to the small leucine-rich proteoglycan (SLRP) family. SLRP class II subfamily. Binds three long, highly sulfated keratan sulfate chains in the cornea but short, non-sulfated poly(N-acetyllactosamine) chains in other tissues. Post-translationally, the N-terminus is blocked. As to expression, abundant in cornea and sclera but also found in other tissues.

The protein localises to the secreted. The protein resides in the extracellular space. It localises to the extracellular matrix. Its function is as follows. May be important in developing and maintaining corneal transparency and for the structure of the stromal matrix. The chain is Keratocan (KERA) from Bos taurus (Bovine).